The following is a 155-amino-acid chain: Ribonuclease H (155 aa).

Residues N4 to K146 form the RNase H type-1 domain. Mg(2+)-binding residues include D13, E51, D73, and D138.

It belongs to the RNase H family. As to quaternary structure, monomer. It depends on Mg(2+) as a cofactor.

It localises to the cytoplasm. The catalysed reaction is Endonucleolytic cleavage to 5'-phosphomonoester.. Its function is as follows. Endonuclease that specifically degrades the RNA of RNA-DNA hybrids. In Thermoanaerobacter pseudethanolicus (strain ATCC 33223 / 39E) (Clostridium thermohydrosulfuricum), this protein is Ribonuclease H.